We begin with the raw amino-acid sequence, 844 residues long: Neuronal PAS domain-containing protein 4B (844 aa).

The tract at residues 61 to 74 (KMYRSTKGASKARR) is basic motif; degenerate. One can recognise a bHLH domain in the interval 61–114 (KMYRSTKGASKARRDQINAEIRSLKELLPISDADKARLSYLHIMSLACIYTRKS). The helix-loop-helix motif stretch occupies residues 75-114 (DQINAEIRSLKELLPISDADKARLSYLHIMSLACIYTRKS). PAS domains follow at residues 132-190 (SLPE…PVDH) and 294-343 (DMRI…LHNG). Positions 410 to 422 (SRQSSDPLSSPDQ) are enriched in polar residues. Disordered stretches follow at residues 410–432 (SRQS…SGLS), 444–479 (GRSS…GGGH), 702–725 (PLPN…SYSQ), and 757–784 (TEGG…EAPA). The span at 704-716 (PNLPSPSPVPPSP) shows a compositional bias: pro residues.

In terms of assembly, efficient DNA binding requires dimerization with another bHLH protein.

The protein localises to the nucleus. Functionally, transcription factor expressed in neurons of the brain that regulates the excitatory-inhibitory balance within neural circuits and is required for contextual memory in the hippocampus. Plays a key role in the structural and functional plasticity of neurons. Acts as an early-response transcription factor in both excitatory and inhibitory neurons, where it induces distinct but overlapping sets of late-response genes in these two types of neurons, allowing the synapses that form on inhibitory and excitatory neurons to be modified by neuronal activity in a manner specific to their function within a circuit, thereby facilitating appropriate circuit responses to sensory experience. The protein is Neuronal PAS domain-containing protein 4B (npas4b) of Danio rerio (Zebrafish).